A 91-amino-acid chain; its full sequence is Putative regulatory protein Tlet_1629 (91 aa).

It belongs to the RemA family.

The sequence is that of Putative regulatory protein Tlet_1629 from Pseudothermotoga lettingae (strain ATCC BAA-301 / DSM 14385 / NBRC 107922 / TMO) (Thermotoga lettingae).